A 671-amino-acid polypeptide reads, in one-letter code: UvrABC system protein B (671 aa).

The Helicase ATP-binding domain occupies 26 to 183; sequence EGLENGLAHQ…RRLSELQYSR (158 aa). 39-46 serves as a coordination point for ATP; sequence GVTGSGKT. The Beta-hairpin signature appears at 92-115; it reads YYDYYQPEAYVPSSDTFIEKDASV. Residues 431–597 form the Helicase C-terminal domain; that stretch reads QVDDLLSEIR…GLNKKIGDIL (167 aa). In terms of domain architecture, UVR spans 631–666; sequence DQKIRELEAKMYTYAQNLEFEQAAELRDQVHQLRQQ.

Belongs to the UvrB family. In terms of assembly, forms a heterotetramer with UvrA during the search for lesions. Interacts with UvrC in an incision complex.

The protein localises to the cytoplasm. The UvrABC repair system catalyzes the recognition and processing of DNA lesions. A damage recognition complex composed of 2 UvrA and 2 UvrB subunits scans DNA for abnormalities. Upon binding of the UvrA(2)B(2) complex to a putative damaged site, the DNA wraps around one UvrB monomer. DNA wrap is dependent on ATP binding by UvrB and probably causes local melting of the DNA helix, facilitating insertion of UvrB beta-hairpin between the DNA strands. Then UvrB probes one DNA strand for the presence of a lesion. If a lesion is found the UvrA subunits dissociate and the UvrB-DNA preincision complex is formed. This complex is subsequently bound by UvrC and the second UvrB is released. If no lesion is found, the DNA wraps around the other UvrB subunit that will check the other stand for damage. The polypeptide is UvrABC system protein B (Yersinia pseudotuberculosis serotype IB (strain PB1/+)).